The primary structure comprises 685 residues: DNA topoisomerase 4 subunit B (685 aa).

The span at 389-400 (EAARKAREESRN) shows a compositional bias: basic and acidic residues. Residues 389–427 (EAARKAREESRNGKKRKKGESLLSGKLTPAQSRNPKKNE) form a disordered region. Positions 426-540 (NELYLVEGDS…AGKVYIALPP (115 aa)) constitute a Toprim domain. 3 residues coordinate Mg(2+): glutamate 432, aspartate 505, and aspartate 507. 2 stretches are compositionally biased toward acidic residues: residues 644-654 (GSILDRSEEDT) and 673-685 (QTDD…FDIE). The interval 644–685 (GSILDRSEEDTSAPTGESLLDAEKTKEAEQTDDTEISLFDIE) is disordered.

Belongs to the type II topoisomerase family. ParE type 1 subfamily. Heterotetramer composed of ParC and ParE. Requires Mg(2+) as cofactor. Mn(2+) is required as a cofactor. The cofactor is Ca(2+).

It catalyses the reaction ATP-dependent breakage, passage and rejoining of double-stranded DNA.. With respect to regulation, pyrrolopyrimidines inhibit both GyrB and its paralog in topoisomerase IV (parE). In terms of biological role, topoisomerase IV is essential for chromosome segregation. It relaxes supercoiled DNA. Performs the decatenation events required during the replication of a circular DNA molecule. This is DNA topoisomerase 4 subunit B from Enterococcus faecalis (strain ATCC 700802 / V583).